We begin with the raw amino-acid sequence, 693 residues long: Sister chromatid cohesion 1 protein 3 (693 aa).

4 disordered regions span residues 167–250 (IPMD…PGTV), 262–361 (DLSP…KNFD), 460–511 (PVSP…TFDN), and 545–573 (TQSG…GQRN). 2 stretches are compositionally biased toward basic and acidic residues: residues 178–201 (VSRH…EPRD) and 232–243 (TEERIPNSERND). The segment covering 264–277 (SPTSHPSFAAQQQD) has biased composition (polar residues). Residues 278-295 (VRVERTESLDETLNEKEP) are compositionally biased toward basic and acidic residues. The segment covering 316-325 (RSGSPGSAAG) has biased composition (low complexity). Composition is skewed to polar residues over residues 465–483 (PDST…QQTE) and 545–564 (TQSG…TSTV).

The protein belongs to the rad21 family. Component of the cohesin complex. In terms of tissue distribution, low expression in shoots, buds, siliques, leaves and roots. Found in, but not limited to, actively dividing cells: in procambium, protoderm and ground meristem in roots, and in shoot and floral meristems.

Its subcellular location is the nucleus. Functionally, may be involved in sister chromatid cohesion during mitosis. This is Sister chromatid cohesion 1 protein 3 (SYN3) from Arabidopsis thaliana (Mouse-ear cress).